The chain runs to 348 residues: Phosphoribosylformylglycinamidine cyclo-ligase (348 aa).

Belongs to the AIR synthase family.

It localises to the cytoplasm. The enzyme catalyses 2-formamido-N(1)-(5-O-phospho-beta-D-ribosyl)acetamidine + ATP = 5-amino-1-(5-phospho-beta-D-ribosyl)imidazole + ADP + phosphate + H(+). It functions in the pathway purine metabolism; IMP biosynthesis via de novo pathway; 5-amino-1-(5-phospho-D-ribosyl)imidazole from N(2)-formyl-N(1)-(5-phospho-D-ribosyl)glycinamide: step 2/2. This chain is Phosphoribosylformylglycinamidine cyclo-ligase, found in Aromatoleum aromaticum (strain DSM 19018 / LMG 30748 / EbN1) (Azoarcus sp. (strain EbN1)).